Consider the following 343-residue polypeptide: Glucokinase (343 aa).

18-23 (GDIGGT) is a binding site for ATP.

Belongs to the bacterial glucokinase family.

The protein resides in the cytoplasm. It catalyses the reaction D-glucose + ATP = D-glucose 6-phosphate + ADP + H(+). The protein is Glucokinase of Brucella melitensis biotype 1 (strain ATCC 23456 / CCUG 17765 / NCTC 10094 / 16M).